Reading from the N-terminus, the 645-residue chain is MVEKRSRQSSSSGSEFSVPPDVDNPPLSIPLKTLSDRYQLIEKLGAGSFGCVTLAKAQFPLSNILGKQHDIRGTLMDQPKNGHQNYITKTQGVVAIKTMMTKLHTLQDYTRVREIKFILAIPANDHLIQIFEVFIDSENYQLHIVMECMEQNLYQMMKHRRRRVFSIPSLKSILSQILAGLKHIHEHNFFHRDLKPENILITPSTQYFEKEYMNQIGYQDNYVIKLADFGLARHVENKNPYTAYVSTRWYRSPEILLRSGYYSKPLDIWAFGCVAVEVTVFRALFPGANEIDQIWKILEVLGTPIKRSDFVNTNHITAPPPGGFWDDASNLVHKLNLKLPYVEGSSLDHLLSSSQLSDLSEVVKKCLRWDPNERATAQELCEMPFFENTVASQVDARGNVTNTEQALIFAGINPVATNTKPIYFNSSTKLPAETESNDIDISNNDHDSHAMCSPTLNQEKLTLVEFLNEFVEEDNDDHSIPDVGTDSTISDSIDETELSKEIRNNLALCQLPDEEVLDHSLSNIRQLTNDIEIINKDEADNMEQLFFDLEIPEKDEFQRKQPFNEHADIDEDIVLPYVNNSNYTHTDRSHHRGDNVLGDASLGDSFNSMPDFTPRNFLIPTLKKSREKFEPHLSNSNQHFGNVTF.

A disordered region spans residues 1 to 24 (MVEKRSRQSSSSGSEFSVPPDVDN). Residues 8 to 17 (QSSSSGSEFS) are compositionally biased toward low complexity. The Protein kinase domain occupies 38–386 (YQLIEKLGAG…AQELCEMPFF (349 aa)). Residues 44-52 (LGAGSFGCV) and lysine 67 contribute to the ATP site. The Proton acceptor role is filled by aspartate 193.

The protein belongs to the protein kinase superfamily. Ser/Thr protein kinase family.

It carries out the reaction L-seryl-[protein] + ATP = O-phospho-L-seryl-[protein] + ADP + H(+). The catalysed reaction is L-threonyl-[protein] + ATP = O-phospho-L-threonyl-[protein] + ADP + H(+). Protein kinase which is essential for the initiation of meiosis and sporulation. This Saccharomyces cerevisiae (strain ATCC 204508 / S288c) (Baker's yeast) protein is Meiosis induction protein kinase IME2/SME1 (IME2).